The following is a 451-amino-acid chain: Hexokinase (451 aa).

A Hexokinase domain is found at 6-445 (QQLFEKVVEI…SGKGAAAIAA (440 aa)). The interval 63 to 195 (NGTETGNFLA…ELNVKCVAVV (133 aa)) is hexokinase small subdomain. Residue 74–79 (DLGGTN) participates in ATP binding. Substrate is bound by residues S144, 161–162 (TK), 196–197 (ND), 222–223 (TN), E249, and E283. The hexokinase large subdomain stretch occupies residues 196-434 (NDTVGTLASC…TRFCLRLSED (239 aa)). Residues 288–289 (GM), 325–329 (TRYLT), and 401–405 (SLYKF) each bind ATP.

Belongs to the hexokinase family. As to quaternary structure, monomer.

The enzyme catalyses a D-hexose + ATP = a D-hexose 6-phosphate + ADP + H(+). It catalyses the reaction D-mannose + ATP = D-mannose 6-phosphate + ADP + H(+). The catalysed reaction is D-fructose + ATP = D-fructose 6-phosphate + ADP + H(+). It carries out the reaction D-glucose + ATP = D-glucose 6-phosphate + ADP + H(+). It functions in the pathway carbohydrate metabolism; hexose metabolism. The protein operates within carbohydrate degradation; glycolysis; D-glyceraldehyde 3-phosphate and glycerone phosphate from D-glucose: step 1/4. Catalyzes the phosphorylation of various hexoses to hexose 6-phosphate. This is Hexokinase from Schistosoma mansoni (Blood fluke).